Reading from the N-terminus, the 231-residue chain is RNA pyrophosphohydrolase (231 aa).

Residues 6 to 149 (GFRPNVGIIL…KRDVYQLALT (144 aa)) enclose the Nudix hydrolase domain. The short motif at 38–59 (GGIKYGETPEQAMYRELHEEIG) is the Nudix box element. Positions 168-200 (VHHGRHGSGQRYAQQPGQPPTLAQRRPLQPVTQ) are disordered.

This sequence belongs to the Nudix hydrolase family. RppH subfamily. It depends on a divalent metal cation as a cofactor.

Its function is as follows. Accelerates the degradation of transcripts by removing pyrophosphate from the 5'-end of triphosphorylated RNA, leading to a more labile monophosphorylated state that can stimulate subsequent ribonuclease cleavage. In Cupriavidus pinatubonensis (strain JMP 134 / LMG 1197) (Cupriavidus necator (strain JMP 134)), this protein is RNA pyrophosphohydrolase.